The chain runs to 249 residues: Tetrahydromethanopterin S-methyltransferase subunit A (249 aa).

The Cytoplasmic segment spans residues 1-227 (MADKKEVIQN…KISSGYYAGK (227 aa)). 5-hydroxybenzimidazolylcob(I)amide is bound at residue histidine 84. The helical transmembrane segment at 228–248 (IEGIVIGFILTLVFLIIIIQG) threads the bilayer. Residue leucine 249 is a topological domain, extracellular.

This sequence belongs to the MtrA family. The complex is composed of 8 subunits; MtrA, MtrB, MtrC, MtrD, MtrE, MtrF, MtrG and MtrH. 5-hydroxybenzimidazolylcob(I)amide serves as cofactor.

It localises to the cell membrane. The catalysed reaction is 5-methyl-5,6,7,8-tetrahydromethanopterin + coenzyme M + 2 Na(+)(in) = 5,6,7,8-tetrahydromethanopterin + methyl-coenzyme M + 2 Na(+)(out). The protein operates within one-carbon metabolism; methanogenesis from CO(2); methyl-coenzyme M from 5,10-methylene-5,6,7,8-tetrahydromethanopterin: step 2/2. In terms of biological role, part of a complex that catalyzes the formation of methyl-coenzyme M and tetrahydromethanopterin from coenzyme M and methyl-tetrahydromethanopterin. This is an energy-conserving, sodium-ion translocating step. The polypeptide is Tetrahydromethanopterin S-methyltransferase subunit A (Methanosphaera stadtmanae (strain ATCC 43021 / DSM 3091 / JCM 11832 / MCB-3)).